Reading from the N-terminus, the 471-residue chain is Histone deacetylase 6 (471 aa).

Met1 is subject to N-acetylmethionine. Residues 20 to 333 form a histone deacetylase region; sequence RVSYFYEPTI…WCYETAVAVG (314 aa). The Proton donor/acceptor role is filled by His153. Positions 188, 190, and 276 each coordinate Zn(2+). The segment at 389–471 is disordered; that stretch reads PSVQFQHTPP…PEPDVNPPSS (83 aa). Residues 453-463 are compositionally biased toward acidic residues; it reads GEDEMDDDNPE.

Belongs to the histone deacetylase family. HD type 1 subfamily. Interacts with Coi1, which functions in an SCF complex that recruits regulators for ubiquitination. Interacts with AHL22. Interacts with AS1. Part of the AS1 repressor complex composed of AS1, LBD6/AS2 and HDA6. Binds to EBS and SHL. Interacts with MBD6. Interacts with HDA5. Interacts with FLD. It depends on Zn(2+) as a cofactor. As to expression, not detected in leaves, stems, flowers and young siliques.

Its subcellular location is the nucleus. It localises to the nucleolus. It catalyses the reaction N(6)-acetyl-L-lysyl-[histone] + H2O = L-lysyl-[histone] + acetate. Inhibited by trichostatin A. In terms of biological role, responsible for the deacetylation of lysine residues on the N-terminal part of the core histones (H2A, H2B, H3 and H4). Might remove acetyl residues only from specific targets, such as rDNA repeats or complex transgenes. Histone deacetylation gives a tag for epigenetic repression and plays an important role in transcriptional regulation, cell cycle progression and developmental events. Histone deacetylases act via the formation of large multiprotein complexes. Required for rRNA gene silencing in nucleolar dominance. Plays a role in transgene silencing, but this effect seems to bee independent of the histone deacetylase activity. Part of the AS1 repressor complex to regulate the KNOX expression in leaf development. Binds to KNAT1, KNAT2, and KNATM chromatin. Involved in the regulation of flowering time. Forms a histone deacetylase complex with HDA5, FLD and MSI4/FVE that represses FLC gene expression to control flowering time. This is Histone deacetylase 6 from Arabidopsis thaliana (Mouse-ear cress).